Reading from the N-terminus, the 417-residue chain is DNA-directed RNA polymerase subunit beta (417 aa).

It belongs to the RNA polymerase beta chain family. In terms of assembly, in plastids the minimal PEP RNA polymerase catalytic core is composed of four subunits: alpha, beta, beta', and beta''. When a (nuclear-encoded) sigma factor is associated with the core the holoenzyme is formed, which can initiate transcription.

The protein resides in the plastid. It localises to the chloroplast. The enzyme catalyses RNA(n) + a ribonucleoside 5'-triphosphate = RNA(n+1) + diphosphate. Its function is as follows. DNA-dependent RNA polymerase catalyzes the transcription of DNA into RNA using the four ribonucleoside triphosphates as substrates. The sequence is that of DNA-directed RNA polymerase subunit beta (rpoB) from Saponaria officinalis (Common soapwort).